A 593-amino-acid polypeptide reads, in one-letter code: Transcription factor ATEG_07667 (593 aa).

Positions Cys18 to Cys47 form a DNA-binding region, zn(2)-C6 fungal-type.

It is found in the nucleus. Its function is as follows. Transcriptional regulator that regulates both the azasperpyranone A biosynthesis clusters A and B. Specifically up-regulates the expression of the cluster A and B specific transcription factors ATEG_03638 and ATEG_07666, which in turn activate the expression of their respective clusters. This Aspergillus terreus (strain NIH 2624 / FGSC A1156) protein is Transcription factor ATEG_07667.